The following is a 139-amino-acid chain: MKRNTNVSSSRRKSRKAHFTASSGERRIRMSAALSHDLRTKYNVRSLPIRKDDEVRVVCGDNKNHEGKVVACYRKKYVIHIDKLTVTKTNGNTAQIGVSPSNVILTKLKLDKDRKALLERKNRTVAADKGKVKVSADVN.

Residues 1 to 25 are disordered; sequence MKRNTNVSSSRRKSRKAHFTASSGE.

The protein belongs to the universal ribosomal protein uL24 family.

This Dictyostelium discoideum (Social amoeba) protein is Large ribosomal subunit protein uL24 (rpl26).